The sequence spans 102 residues: DET1- and DDB1-associated protein 1 (102 aa).

Residue A2 is modified to N-acetylalanine. 2 positions are modified to phosphoserine: S33 and S95. Residues 67–102 (NAAKKRDQEQVEAEGESSAPPRKVARTDSPDMPEDT) form a disordered region.

It belongs to the DDA1 family. As to quaternary structure, component of numerous DCX (DDB1-CUL4-X-box) E3 ubiquitin-protein ligase complexes which consist of a core of DDB1, cullin-4 (CUL4A or CUL4B), DDA1 and RBX1. Component of the DCX(DCAF15) complex, also named CLR4(DCAF15) complex, composed of DCAF15, DDB1, cullin-4 (CUL4A or CUL4B), DDA1 and RBX1. Part of the DDD core complex containing DET1, DDA1 and DDB1; the DDD core complex recruits a specific UBE2E enzyme, such as UBE2E1, UBE2E2 UBE2E3, to form specific DDD-E2 complexes.

It participates in protein modification; protein ubiquitination. In terms of biological role, functions as a component of numerous distinct DCX (DDB1-CUL4-X-box) E3 ubiquitin-protein ligase complexes which mediate the ubiquitination and subsequent proteasomal degradation of target proteins. In the DCX complexes, acts as a scaffolding subunit required to stabilize the complex. This Mus musculus (Mouse) protein is DET1- and DDB1-associated protein 1.